A 660-amino-acid polypeptide reads, in one-letter code: UvrABC system protein B (660 aa).

Residues 26-414 form the Helicase ATP-binding domain; that stretch reads KKVLAGQRHQ…PEMTEQIIRP (389 aa). Position 39–46 (39–46) interacts with ATP; it reads GATGTGKT. Positions 92–115 match the Beta-hairpin motif; sequence YYDYYQPEAYVPSTDTFIEKDASI. Residues 430–596 form the Helicase C-terminal domain; it reads QIDNLIEEIR…TIRKEVRDVI (167 aa). Residues 624–659 enclose the UVR domain; sequence EKVIEQMENEMKQAAKDLDFEKAAELRDVILELKAE.

It belongs to the UvrB family. In terms of assembly, forms a heterotetramer with UvrA during the search for lesions. Interacts with UvrC in an incision complex.

Its subcellular location is the cytoplasm. In terms of biological role, the UvrABC repair system catalyzes the recognition and processing of DNA lesions. A damage recognition complex composed of 2 UvrA and 2 UvrB subunits scans DNA for abnormalities. Upon binding of the UvrA(2)B(2) complex to a putative damaged site, the DNA wraps around one UvrB monomer. DNA wrap is dependent on ATP binding by UvrB and probably causes local melting of the DNA helix, facilitating insertion of UvrB beta-hairpin between the DNA strands. Then UvrB probes one DNA strand for the presence of a lesion. If a lesion is found the UvrA subunits dissociate and the UvrB-DNA preincision complex is formed. This complex is subsequently bound by UvrC and the second UvrB is released. If no lesion is found, the DNA wraps around the other UvrB subunit that will check the other stand for damage. In Oceanobacillus iheyensis (strain DSM 14371 / CIP 107618 / JCM 11309 / KCTC 3954 / HTE831), this protein is UvrABC system protein B.